A 229-amino-acid polypeptide reads, in one-letter code: UPF0173 metal-dependent hydrolase SAOUHSC_01815 (229 aa).

It belongs to the UPF0173 family.

The polypeptide is UPF0173 metal-dependent hydrolase SAOUHSC_01815 (Staphylococcus aureus (strain NCTC 8325 / PS 47)).